Here is a 305-residue protein sequence, read N- to C-terminus: Transmembrane epididymal protein 1A (305 aa).

Residues 4-24 traverse the membrane as a helical segment; sequence FIGHISPGLFLVFYGLYQAVI. The N-linked (GlcNAc...) asparagine glycan is linked to asparagine 32. A run of 5 helical transmembrane segments spans residues 54–74, 124–144, 159–179, 187–207, and 223–243; these read IAHA…YEIS, CVLL…LLLV, SLLI…LWAP, IETF…FILF, and IMFV…CMLG. Residues 285 to 305 form a disordered region; the sequence is EQQDKDDQAPLLSKISPCDRA.

This sequence belongs to the TMEM45 family.

The protein localises to the membrane. In Mus musculus (Mouse), this protein is Transmembrane epididymal protein 1A.